Consider the following 549-residue polypeptide: Dihydroxy-acid dehydratase (549 aa).

Mg(2+) is bound at residue Asp-78. Cys-119 provides a ligand contact to [2Fe-2S] cluster. Positions 120 and 121 each coordinate Mg(2+). Lys-121 carries the post-translational modification N6-carboxylysine. Cys-191 lines the [2Fe-2S] cluster pocket. Residue Glu-441 coordinates Mg(2+). Ser-466 serves as the catalytic Proton acceptor.

It belongs to the IlvD/Edd family. As to quaternary structure, homodimer. It depends on [2Fe-2S] cluster as a cofactor. Requires Mg(2+) as cofactor.

It catalyses the reaction (2R)-2,3-dihydroxy-3-methylbutanoate = 3-methyl-2-oxobutanoate + H2O. The enzyme catalyses (2R,3R)-2,3-dihydroxy-3-methylpentanoate = (S)-3-methyl-2-oxopentanoate + H2O. Its pathway is amino-acid biosynthesis; L-isoleucine biosynthesis; L-isoleucine from 2-oxobutanoate: step 3/4. It functions in the pathway amino-acid biosynthesis; L-valine biosynthesis; L-valine from pyruvate: step 3/4. In terms of biological role, functions in the biosynthesis of branched-chain amino acids. Catalyzes the dehydration of (2R,3R)-2,3-dihydroxy-3-methylpentanoate (2,3-dihydroxy-3-methylvalerate) into 2-oxo-3-methylpentanoate (2-oxo-3-methylvalerate) and of (2R)-2,3-dihydroxy-3-methylbutanoate (2,3-dihydroxyisovalerate) into 2-oxo-3-methylbutanoate (2-oxoisovalerate), the penultimate precursor to L-isoleucine and L-valine, respectively. The polypeptide is Dihydroxy-acid dehydratase (Methanothermobacter thermautotrophicus (strain ATCC 29096 / DSM 1053 / JCM 10044 / NBRC 100330 / Delta H) (Methanobacterium thermoautotrophicum)).